The primary structure comprises 155 residues: Fibroblast growth factor 2 (155 aa).

Positions 1–9 (MAAGSITTL) are excised as a propeptide. The interval 1–20 (MAAGSITTLPALPEDGGSSA) is disordered. Asparagine 36 provides a ligand contact to heparin. Positions 46–48 (DGR) match the Cell attachment site; atypical motif. Phosphotyrosine; by TEC is present on tyrosine 82. The Cell attachment site; atypical motif lies at 88 to 90 (DGR). Lysine 95 participates in a covalent cross-link: Glycyl lysine isopeptide (Lys-Gly) (interchain with G-Cter in SUMO1). The heparin-binding stretch occupies residues 128 to 144 (KRTGQYKLGPKTGPGQK).

It belongs to the heparin-binding growth factors family. Monomer. Homodimer. Interacts with FGFR1, FGFR2, FGFR3 and FGFR4. Affinity between fibroblast growth factors (FGFs) and their receptors is increased by heparan sulfate glycosaminoglycans that function as coreceptors. Interacts with CSPG4, FGFBP1 and TEC. Found in a complex with FGFBP1, FGF1 and FGF2. Interacts with FGFBP3. Interacts with integrin ITGAV:ITGB3; the interaction is required for FGF2 signaling. Interacts with SNORC (via the extracellular domain). Interacts with glypican GPC3. Post-translationally, phosphorylation at Tyr-82 regulates FGF2 unconventional secretion.

It localises to the secreted. The protein localises to the nucleus. Its function is as follows. Acts as a ligand for FGFR1, FGFR2, FGFR3 and FGFR4. Also acts as an integrin ligand which is required for FGF2 signaling. Binds to integrin ITGAV:ITGB3. Plays an important role in the regulation of cell survival, cell division, cell differentiation and cell migration. Functions as a potent mitogen in vitro. Can induce angiogenesis. Mediates phosphorylation of ERK1/2 and thereby promotes retinal lens fiber differentiation. The chain is Fibroblast growth factor 2 (FGF2) from Ovis aries (Sheep).